The chain runs to 262 residues: Shikimate dehydrogenase (NADP(+)) (262 aa).

Shikimate-binding positions include 14–16 and threonine 60; that span reads SAS. Lysine 64 functions as the Proton acceptor in the catalytic mechanism. Positions 85 and 100 each coordinate shikimate. NADP(+) is bound by residues 121 to 125, 145 to 150, and phenylalanine 203; these read GAGGA and NRTAER. Tyrosine 205 provides a ligand contact to shikimate. NADP(+) is bound at residue glycine 227.

This sequence belongs to the shikimate dehydrogenase family. Homodimer.

The enzyme catalyses shikimate + NADP(+) = 3-dehydroshikimate + NADPH + H(+). The protein operates within metabolic intermediate biosynthesis; chorismate biosynthesis; chorismate from D-erythrose 4-phosphate and phosphoenolpyruvate: step 4/7. In terms of biological role, involved in the biosynthesis of the chorismate, which leads to the biosynthesis of aromatic amino acids. Catalyzes the reversible NADPH linked reduction of 3-dehydroshikimate (DHSA) to yield shikimate (SA). This is Shikimate dehydrogenase (NADP(+)) from Pyrobaculum aerophilum (strain ATCC 51768 / DSM 7523 / JCM 9630 / CIP 104966 / NBRC 100827 / IM2).